The sequence spans 94 residues: Mobilization protein C (94 aa).

As to quaternary structure, interacts with MobA and MobB to form the relaxosome.

In terms of biological role, this protein is essential to promote the specific transfer of the plasmid in the presence of conjugative plasmids. In Escherichia coli, this protein is Mobilization protein C (mobC).